A 203-amino-acid chain; its full sequence is dITP/XTP pyrophosphatase (203 aa).

Position 16–21 (16–21) interacts with substrate; the sequence is SHNRGK. Mg(2+) is bound by residues glutamate 48 and aspartate 77. Aspartate 77 serves as the catalytic Proton acceptor. Substrate is bound by residues serine 78, 161–164, lysine 184, and 189–190; these read FGYD and HR.

This sequence belongs to the HAM1 NTPase family. As to quaternary structure, homodimer. Mg(2+) is required as a cofactor.

The enzyme catalyses XTP + H2O = XMP + diphosphate + H(+). The catalysed reaction is dITP + H2O = dIMP + diphosphate + H(+). It catalyses the reaction ITP + H2O = IMP + diphosphate + H(+). Functionally, pyrophosphatase that catalyzes the hydrolysis of nucleoside triphosphates to their monophosphate derivatives, with a high preference for the non-canonical purine nucleotides XTP (xanthosine triphosphate), dITP (deoxyinosine triphosphate) and ITP. Seems to function as a house-cleaning enzyme that removes non-canonical purine nucleotides from the nucleotide pool, thus preventing their incorporation into DNA/RNA and avoiding chromosomal lesions. The polypeptide is dITP/XTP pyrophosphatase (Rhodospirillum centenum (strain ATCC 51521 / SW)).